Reading from the N-terminus, the 381-residue chain is MTETQSLELAKELISRPSVTPDDRDCQKLLAERLHKIGFAAEELHFGDTKNIWLRRGTKAPVVCFAGHTDVVPTGPVEKWDSPPFEPAERDGRLYGRGAADMKTSIACFVTACERFVAKHPNHQGSIALLITSDEEGDALDGTTKVVDVLKARDELIDYCIVGEPTAVDKLGDMIKNGRRGSLSGNLTVKGKQGHIAYPHLAINPVHTFAPALLELTQEVWDEGNEYFPPTSFQISNINGGTGATNVIPGELNVKFNFRFSTESTEAGLKQRVHAILDKHGVQYDLQWSCSGQPFLTQAGKLTDVARAAIAETCGIEAELSTTGGTSDGRFIKAIAQELIELGPSNATIHQINENVRLNDIPKLSAVYEGILARLLAGNAV.

A Zn(2+)-binding site is contributed by histidine 68. Aspartate 70 is a catalytic residue. Residue aspartate 101 coordinates Zn(2+). Residue glutamate 135 is the Proton acceptor of the active site. Positions 136, 164, and 350 each coordinate Zn(2+).

The protein belongs to the peptidase M20A family. DapE subfamily. In terms of assembly, homodimer. The cofactor is Zn(2+). It depends on Co(2+) as a cofactor.

It carries out the reaction N-succinyl-(2S,6S)-2,6-diaminopimelate + H2O = (2S,6S)-2,6-diaminopimelate + succinate. It functions in the pathway amino-acid biosynthesis; L-lysine biosynthesis via DAP pathway; LL-2,6-diaminopimelate from (S)-tetrahydrodipicolinate (succinylase route): step 3/3. Its function is as follows. Catalyzes the hydrolysis of N-succinyl-L,L-diaminopimelic acid (SDAP), forming succinate and LL-2,6-diaminopimelate (DAP), an intermediate involved in the bacterial biosynthesis of lysine and meso-diaminopimelic acid, an essential component of bacterial cell walls. In Neisseria meningitidis serogroup B (strain ATCC BAA-335 / MC58), this protein is Succinyl-diaminopimelate desuccinylase (dapE).